An 835-amino-acid polypeptide reads, in one-letter code: Invasin (835 aa).

One can recognise a Big-1 domain in the interval 451–541 (VITSEVTDDG…QQATVDVRFA (91 aa)).

This sequence belongs to the intimin/invasin family.

The protein localises to the cell outer membrane. In terms of biological role, invasin is a protein that allows enteric bacteria to penetrate cultured mammalian cells. The entry of invasin in the cell is mediated by binding several beta-1 chain integrins. The protein is Invasin of Yersinia enterocolitica.